The primary structure comprises 214 residues: Endoplasmic reticulum vesicle protein 25 (214 aa).

The signal sequence occupies residues 1-20; that stretch reads MRSISTLLFIISTFISLVSA. Residues 21 to 183 are Lumenal-facing; it reads LQLAIPATTN…TNESTNSRVK (163 aa). The GOLD domain maps to 33 to 124; the sequence is PFCIRDFVQE…VREIELDVES (92 aa). A helical transmembrane segment spans residues 184–204; that stretch reads WFSILVITSLVGLGAWQVQYL. Topologically, residues 205-214 are cytoplasmic; it reads RHYFKVKHII.

It belongs to the EMP24/GP25L family.

It is found in the endoplasmic reticulum membrane. The protein localises to the golgi apparatus membrane. Its function is as follows. Constituent of COPII-coated endoplasmic reticulum-derived transport vesicles. Required for efficient transport of a subset of secretory proteins to the Golgi. Facilitates retrograde transport from the Golgi to the endoplasmic reticulum. The protein is Endoplasmic reticulum vesicle protein 25 (ERV25) of Debaryomyces hansenii (strain ATCC 36239 / CBS 767 / BCRC 21394 / JCM 1990 / NBRC 0083 / IGC 2968) (Yeast).